The chain runs to 166 residues: Ribosome maturation factor RimP (166 aa).

The protein belongs to the RimP family.

The protein resides in the cytoplasm. Its function is as follows. Required for maturation of 30S ribosomal subunits. The polypeptide is Ribosome maturation factor RimP (Rickettsia akari (strain Hartford)).